The primary structure comprises 182 residues: Large ribosomal subunit protein uL6 (182 aa).

The protein belongs to the universal ribosomal protein uL6 family. Part of the 50S ribosomal subunit.

This protein binds to the 23S rRNA, and is important in its secondary structure. It is located near the subunit interface in the base of the L7/L12 stalk, and near the tRNA binding site of the peptidyltransferase center. This chain is Large ribosomal subunit protein uL6, found in Methanococcus vannielii.